Reading from the N-terminus, the 428-residue chain is Glutamate-1-semialdehyde 2,1-aminomutase (428 aa).

Lys265 is modified (N6-(pyridoxal phosphate)lysine).

Belongs to the class-III pyridoxal-phosphate-dependent aminotransferase family. HemL subfamily. In terms of assembly, homodimer. Pyridoxal 5'-phosphate is required as a cofactor.

Its subcellular location is the cytoplasm. It carries out the reaction (S)-4-amino-5-oxopentanoate = 5-aminolevulinate. Its pathway is porphyrin-containing compound metabolism; protoporphyrin-IX biosynthesis; 5-aminolevulinate from L-glutamyl-tRNA(Glu): step 2/2. In Hamiltonella defensa subsp. Acyrthosiphon pisum (strain 5AT), this protein is Glutamate-1-semialdehyde 2,1-aminomutase.